The following is a 415-amino-acid chain: Gamma-glutamyl phosphate reductase (415 aa).

It belongs to the gamma-glutamyl phosphate reductase family.

It is found in the cytoplasm. It carries out the reaction L-glutamate 5-semialdehyde + phosphate + NADP(+) = L-glutamyl 5-phosphate + NADPH + H(+). It participates in amino-acid biosynthesis; L-proline biosynthesis; L-glutamate 5-semialdehyde from L-glutamate: step 2/2. Catalyzes the NADPH-dependent reduction of L-glutamate 5-phosphate into L-glutamate 5-semialdehyde and phosphate. The product spontaneously undergoes cyclization to form 1-pyrroline-5-carboxylate. The polypeptide is Gamma-glutamyl phosphate reductase (Listeria welshimeri serovar 6b (strain ATCC 35897 / DSM 20650 / CCUG 15529 / CIP 8149 / NCTC 11857 / SLCC 5334 / V8)).